The sequence spans 119 residues: Large ribosomal subunit protein bL20c (119 aa).

Belongs to the bacterial ribosomal protein bL20 family.

It localises to the plastid. It is found in the chloroplast. In terms of biological role, binds directly to 23S ribosomal RNA and is necessary for the in vitro assembly process of the 50S ribosomal subunit. It is not involved in the protein synthesizing functions of that subunit. The protein is Large ribosomal subunit protein bL20c (rpl20) of Zea mays (Maize).